A 152-amino-acid polypeptide reads, in one-letter code: Superoxide dismutase [Cu-Zn] (152 aa).

The Cu cation site is built by His-45, His-47, and His-62. A disulfide bridge connects residues Cys-56 and Cys-145. Residues His-62, His-70, His-79, and Asp-82 each coordinate Zn(2+). His-119 contacts Cu cation.

The protein belongs to the Cu-Zn superoxide dismutase family. Homodimer. The cofactor is Cu cation. It depends on Zn(2+) as a cofactor.

Its subcellular location is the cytoplasm. It carries out the reaction 2 superoxide + 2 H(+) = H2O2 + O2. Destroys radicals which are normally produced within the cells and which are toxic to biological systems. The chain is Superoxide dismutase [Cu-Zn] (SODCC) from Carica papaya (Papaya).